An 83-amino-acid chain; its full sequence is Small ribosomal subunit protein uS17 (83 aa).

Belongs to the universal ribosomal protein uS17 family. Part of the 30S ribosomal subunit.

In terms of biological role, one of the primary rRNA binding proteins, it binds specifically to the 5'-end of 16S ribosomal RNA. This Francisella tularensis subsp. holarctica (strain FTNF002-00 / FTA) protein is Small ribosomal subunit protein uS17.